The sequence spans 780 residues: ATP-dependent 6-phosphofructokinase, muscle type (780 aa).

N-acetylthreonine is present on T2. Residues 2–390 (THEEHHAART…NWEVYKLLAH (389 aa)) form an N-terminal catalytic PFK domain 1 region. ATP is bound by residues G25, 88 to 89 (RC), and 118 to 121 (GDGS). D119 contributes to the Mg(2+) binding site. Phosphoserine is present on S133. Substrate-binding positions include 164 to 166 (SID), R201, 208 to 210 (MGR), E264, R292, and 298 to 301 (HVQR). D166 serves as the catalytic Proton acceptor. The residue at position 377 (S377) is a Phosphoserine. Residues 391–401 (IRPPAPKSGSY) are interdomain linker. The interval 402–780 (TVAVMNVGAP…SRKRSGEATV (379 aa)) is C-terminal regulatory PFK domain 2. Beta-D-fructose 2,6-bisphosphate is bound by residues R471 and 528 to 532 (TVSNN). O-linked (GlcNAc) serine glycosylation occurs at S530. K557 is subject to N6-(2-hydroxyisobutyryl)lysine. Residues R566, 573-575 (MGG), E629, R655, and 661-664 (HMQQ) each bind beta-D-fructose 2,6-bisphosphate. Residue S667 is modified to Phosphoserine. Position 735 (R735) interacts with beta-D-fructose 2,6-bisphosphate. A Phosphoserine; by PKA modification is found at S775.

This sequence belongs to the phosphofructokinase type A (PFKA) family. ATP-dependent PFK group I subfamily. Eukaryotic two domain clade 'E' sub-subfamily. As to quaternary structure, homo- and heterotetramers. Phosphofructokinase (PFK) enzyme functions as a tetramer composed of different combinations of 3 types of subunits, called PFKM (M), PFKL (L) and PFKP (P). The composition of the PFK tetramer differs according to the tissue type it is present in. The kinetic and regulatory properties of the tetrameric enzyme are dependent on the subunit composition, hence can vary across tissues. Interacts (via C-terminus) with HK1 (via N-terminal spermatogenic cell-specific region). Mg(2+) is required as a cofactor. GlcNAcylation decreases enzyme activity.

Its subcellular location is the cytoplasm. It carries out the reaction beta-D-fructose 6-phosphate + ATP = beta-D-fructose 1,6-bisphosphate + ADP + H(+). It functions in the pathway carbohydrate degradation; glycolysis; D-glyceraldehyde 3-phosphate and glycerone phosphate from D-glucose: step 3/4. Allosterically activated by ADP, AMP, or fructose 2,6-bisphosphate, and allosterically inhibited by ATP or citrate. In terms of biological role, catalyzes the phosphorylation of D-fructose 6-phosphate to fructose 1,6-bisphosphate by ATP, the first committing step of glycolysis. This chain is ATP-dependent 6-phosphofructokinase, muscle type (PFKM), found in Oryctolagus cuniculus (Rabbit).